We begin with the raw amino-acid sequence, 162 residues long: Putative ripening-related protein 7 (162 aa).

The N-terminal stretch at 1–30 (MAAAAASTKIVAVVVAVLLAILEMPSCAVA) is a signal peptide.

The protein belongs to the kiwellin family.

The protein localises to the secreted. This is Putative ripening-related protein 7 from Oryza sativa subsp. japonica (Rice).